The following is a 473-amino-acid chain: ATP synthase subunit beta (473 aa).

Residue 153–160 (GGAGVGKT) coordinates ATP.

The protein belongs to the ATPase alpha/beta chains family. F-type ATPases have 2 components, CF(1) - the catalytic core - and CF(0) - the membrane proton channel. CF(1) has five subunits: alpha(3), beta(3), gamma(1), delta(1), epsilon(1). CF(0) has three main subunits: a(1), b(2) and c(9-12). The alpha and beta chains form an alternating ring which encloses part of the gamma chain. CF(1) is attached to CF(0) by a central stalk formed by the gamma and epsilon chains, while a peripheral stalk is formed by the delta and b chains.

It localises to the cell inner membrane. It carries out the reaction ATP + H2O + 4 H(+)(in) = ADP + phosphate + 5 H(+)(out). Produces ATP from ADP in the presence of a proton gradient across the membrane. The catalytic sites are hosted primarily by the beta subunits. The chain is ATP synthase subunit beta from Rickettsia bellii (strain RML369-C).